The following is a 215-amino-acid chain: N-(5'-phosphoribosyl)anthranilate isomerase (215 aa).

This sequence belongs to the TrpF family.

It carries out the reaction N-(5-phospho-beta-D-ribosyl)anthranilate = 1-(2-carboxyphenylamino)-1-deoxy-D-ribulose 5-phosphate. The protein operates within amino-acid biosynthesis; L-tryptophan biosynthesis; L-tryptophan from chorismate: step 3/5. In Paracoccus denitrificans (strain Pd 1222), this protein is N-(5'-phosphoribosyl)anthranilate isomerase.